Reading from the N-terminus, the 1770-residue chain is Probable outer membrane protein PmpC (1770 aa).

An N-terminal signal peptide occupies residues 1–20 (MKFMSATAVFAAALSSVTEA). Disordered regions lie at residues 73 to 109 (LPRKHLSSSSEASPTTEGVSSSSSGETDEKTEEELDN), 264 to 311 (EDTL…GKGG), 481 to 505 (PAAPSLTEAESDQTDQTETSDTNSD), 611 to 818 (ESTP…STTE), and 1271 to 1329 (LRII…TSRT). Positions 85–97 (SPTTEGVSSSSSG) are enriched in low complexity. Polar residues predominate over residues 268 to 285 (DSTPETEQTESNGNQDGS). Composition is skewed to low complexity over residues 294–303 (SESPESTPSP) and 496–505 (QTETSDTNSD). Composition is skewed to polar residues over residues 631–675 (TEDP…TGNA) and 682–703 (QDSTQSNEENTLPNSNIDQSNE). 2 stretches are compositionally biased toward low complexity: residues 719–748 (ESVSSSSESGSSTPQDGGAASSGAPSGDQS) and 762–802 (STDS…GDSA). Residues 1303-1319 (NNDASNQGESANGSSSP) show a composition bias toward polar residues. Residues 1477 to 1770 (EEVSYNNLWI…MMNCGARMTF (294 aa)) form the Autotransporter domain.

It belongs to the PMP outer membrane protein family.

Its subcellular location is the secreted. It localises to the cell wall. The protein localises to the cell outer membrane. The protein is Probable outer membrane protein PmpC (pmpC) of Chlamydia trachomatis serovar D (strain ATCC VR-885 / DSM 19411 / UW-3/Cx).